A 226-amino-acid chain; its full sequence is Deoxyribose-phosphate aldolase (226 aa).

The active-site Proton donor/acceptor is the D93. K159 (schiff-base intermediate with acetaldehyde) is an active-site residue. Catalysis depends on K189, which acts as the Proton donor/acceptor.

This sequence belongs to the DeoC/FbaB aldolase family. DeoC type 1 subfamily.

It is found in the cytoplasm. It catalyses the reaction 2-deoxy-D-ribose 5-phosphate = D-glyceraldehyde 3-phosphate + acetaldehyde. The protein operates within carbohydrate degradation; 2-deoxy-D-ribose 1-phosphate degradation; D-glyceraldehyde 3-phosphate and acetaldehyde from 2-deoxy-alpha-D-ribose 1-phosphate: step 2/2. In terms of biological role, catalyzes a reversible aldol reaction between acetaldehyde and D-glyceraldehyde 3-phosphate to generate 2-deoxy-D-ribose 5-phosphate. The sequence is that of Deoxyribose-phosphate aldolase from Mycobacterium marinum (strain ATCC BAA-535 / M).